Consider the following 641-residue polypeptide: Putative ABC transporter ATP-binding protein MA_0870 (641 aa).

Residues 10–250 (IEIKDLWYTY…IEVFHRLGLR (241 aa)) enclose the ABC transporter 1 domain. 44–51 (GPTGCGKS) contributes to the ATP binding site. A disordered region spans residues 286-332 (VKTPRNFSNPEEETGRRTDPAERNEFVNTGSGNIKYGDNRSENKGSE). Composition is skewed to basic and acidic residues over residues 298–310 (ETGRRTDPAERNE) and 322–332 (GDNRSENKGSE). The 229-residue stretch at 338-566 (ISIRDLWSGY…IEILKQASLT (229 aa)) folds into the ABC transporter 2 domain. ATP is bound at residue 371-378 (GTNGSGKS).

It belongs to the ABC transporter superfamily.

It is found in the cell membrane. Functionally, probably part of an ABC transporter complex. Responsible for energy coupling to the transport system. In Methanosarcina acetivorans (strain ATCC 35395 / DSM 2834 / JCM 12185 / C2A), this protein is Putative ABC transporter ATP-binding protein MA_0870.